Reading from the N-terminus, the 589-residue chain is ATP-dependent lipid A-core flippase (589 aa).

The next 5 helical transmembrane spans lie at 29–49 (LLLVAALIAALIEAAGTTGFL), 70–90 (WLPVQIILLFVIRGAAGYITD), 157–177 (VIGALALMLWHSWQVTLTILV), 261–281 (MIGAIGLSALLFVAGAQALAG), and 283–303 (LTAGDFVVLMTSMLTIIPGLK). One can recognise an ABC transmembrane type-1 domain in the interval 32-314 (VAALIAALIE…LTNVQNMVQR (283 aa)). The region spanning 346-582 (IEFRDVTARY…GGLYSHLHGM (237 aa)) is the ABC transporter domain. 380–387 (GRSGSGKS) lines the ATP pocket.

Belongs to the ABC transporter superfamily. Lipid exporter (TC 3.A.1.106) family. In terms of assembly, homodimer.

Its subcellular location is the cell inner membrane. The catalysed reaction is ATP + H2O + lipid A-core oligosaccharideSide 1 = ADP + phosphate + lipid A-core oligosaccharideSide 2.. Functionally, involved in lipopolysaccharide (LPS) biosynthesis. Translocates lipid A-core from the inner to the outer leaflet of the inner membrane. Transmembrane domains (TMD) form a pore in the inner membrane and the ATP-binding domain (NBD) is responsible for energy generation. The polypeptide is ATP-dependent lipid A-core flippase (Xanthomonas campestris pv. campestris (strain 8004)).